We begin with the raw amino-acid sequence, 121 residues long: General odorant-binding protein 72 (121 aa).

2 cysteine pairs are disulfide-bonded: cysteine 45/cysteine 101 and cysteine 90/cysteine 110.

The protein belongs to the PBP/GOBP family.

Its subcellular location is the secreted. Its function is as follows. Present in the aqueous fluid surrounding olfactory sensory dendrites and are thought to aid in the capture and transport of hydrophobic odorants into and through this fluid. The sequence is that of General odorant-binding protein 72 (Obp72) from Anopheles gambiae (African malaria mosquito).